The sequence spans 608 residues: Malonate--CoA ligase (608 aa).

This sequence belongs to the ATP-dependent AMP-binding enzyme family. In terms of tissue distribution, expressed in flowers.

Its subcellular location is the cytoplasm. It is found in the nucleus. The catalysed reaction is malonate + ATP + CoA = malonyl-CoA + AMP + diphosphate. Malonate--CoA ligase that catalyzes the formation of malonyl-CoA directly from malonate and CoA. May be required for the detoxification of malonate. In Arabidopsis thaliana (Mouse-ear cress), this protein is Malonate--CoA ligase (AAE13).